The following is a 411-amino-acid chain: Putative polysaccharide ligase RC0486 (411 aa).

10 helical membrane passes run 15-35 (LGMLAGLSAAATVTIFLLISF), 78-98 (GITMLFTAWCFISCLFAIHLI), 101-121 (LATFTQVFILLFLGFAVSNSA), 133-153 (LIFGILTAILLFFIEYSSNGF), 166-186 (MLDRGCALLSITAWVAIIILL), 207-227 (ISDSLASFLGFGIGGVIFILT), 233-253 (IFFKLIAISLITGSLLFPVIA), 328-348 (ILQITLELGIIGLILFLCLVY), 361-381 (NFKAISYACFINYYIIGMISY), and 383-403 (IWQIWWISSGIWVLVLMKLLV).

This sequence belongs to the O-antigen ligase family.

Its subcellular location is the membrane. The protein is Putative polysaccharide ligase RC0486 of Rickettsia conorii (strain ATCC VR-613 / Malish 7).